We begin with the raw amino-acid sequence, 353 residues long: Replication factor C subunit 2 (353 aa).

N-acetylmethionine is present on Met-1. ATP-binding positions include Val-28, Arg-32, 65–73 (GPPGTGKTS), Asn-171, and Arg-229.

The protein belongs to the activator 1 small subunits family. In terms of assembly, replication factor C (RFC) is a heteropentamer of subunits RFC1, RFC2, RFC3, RFC4 and RFC5 and forms a complex with POL30/PCNA in the presence of ATP. Component of the RAD24-RFC complex which consists of RAD14, RFC2, RFC3, RFC4 and RFC5 and associates with the checkpoint clamp DDC1:MEC3:RAD17 complex. Component of the ELG1-RFC complex which consists of ELG1, RFC2, RFC3, RFC4 and RFC5. Component of the CTF18-RFC complex, which consists of CTF18, CTF8, DCC1, RFC2, RFC3, RFC4 and RFC5. RFC2 interacts with ECO1.

It is found in the nucleus. Component of ATP-dependent clamp loader (RFC and RFC-like) complexes for DNA clamps, such as the POL30/PCNA homotrimer and the checkpoint clamp DDC1:MEC3:RAD17 complex. During a clamp loading circle, the RFC:clamp complex binds to DNA and the recognition of the double-stranded/single-stranded junction stimulates ATP hydrolysis by RFC. The complex presumably provides bipartite ATP sites in which one subunit supplies a catalytic site for hydrolysis of ATP bound to the neighboring subunit. Dissociation of RFC from the clamp leaves the clamp encircling DNA. Component of the replication factor C (RFC or activator 1) complex which loads POL30/PCNA and acts during elongation of primed DNA templates by DNA polymerase delta and epsilon. RFC has an essential but redundant activity in sister chromatid cohesion establishment. Component of the RFC-like complex CTF18-RFC which is required for efficient establishment of chromosome cohesion during S-phase and may load or unload POL30/PCNA. Component of the RFC-like RAD24-RFC complex which loads the checkpoint clamp DDC1:MEC3:RAD17 complex and is involved in DNA repair pathways. Component of the RFC-like ELG1-RFC complex which appears to have a role in DNA replication, replication fork re-start, recombination and repair. RFC2 binds ATP and single-stranded DNA. The protein is Replication factor C subunit 2 (RFC2) of Saccharomyces cerevisiae (strain ATCC 204508 / S288c) (Baker's yeast).